Reading from the N-terminus, the 425-residue chain is Serine--tRNA ligase (425 aa).

Residue 233 to 235 participates in L-serine binding; it reads TAE. Residue 264-266 participates in ATP binding; it reads RAE. Residue Glu287 coordinates L-serine. Residue 351–354 coordinates ATP; it reads EISS. Ser387 serves as a coordination point for L-serine.

It belongs to the class-II aminoacyl-tRNA synthetase family. Type-1 seryl-tRNA synthetase subfamily. Homodimer. The tRNA molecule binds across the dimer.

It localises to the cytoplasm. The enzyme catalyses tRNA(Ser) + L-serine + ATP = L-seryl-tRNA(Ser) + AMP + diphosphate + H(+). The catalysed reaction is tRNA(Sec) + L-serine + ATP = L-seryl-tRNA(Sec) + AMP + diphosphate + H(+). It functions in the pathway aminoacyl-tRNA biosynthesis; selenocysteinyl-tRNA(Sec) biosynthesis; L-seryl-tRNA(Sec) from L-serine and tRNA(Sec): step 1/1. In terms of biological role, catalyzes the attachment of serine to tRNA(Ser). Is also able to aminoacylate tRNA(Sec) with serine, to form the misacylated tRNA L-seryl-tRNA(Sec), which will be further converted into selenocysteinyl-tRNA(Sec). This Clostridium perfringens (strain 13 / Type A) protein is Serine--tRNA ligase.